The chain runs to 420 residues: Coiled-coil domain-containing protein 85C (420 aa).

Residue alanine 2 is modified to N-acetylalanine. 2 coiled-coil regions span residues 26 to 92 (ELLR…RELC) and 122 to 165 (HEVA…LAAA). The tract at residues 165–271 (AGGAGGGGGG…NGLHDPSSTY (107 aa)) is disordered. Gly residues predominate over residues 166 to 176 (GGAGGGGGGAG). Phosphoserine is present on serine 179. A compositionally biased stretch (low complexity) spans 185-212 (ASLSGPLAGSAAGSGARDVGDGSSTSSA). Residue serine 247 is modified to Phosphoserine.

It belongs to the CCDC85 family. In terms of assembly, may interact with ARVCF, CTNND1, CTNND2 and PKP4. Predominantly expressed on the surface of the lateral ventricular walls of the developing cerebral cortex.

It localises to the cell junction. Its subcellular location is the tight junction. The protein resides in the adherens junction. Its function is as follows. May play a role in cell-cell adhesion and epithelium development through its interaction with proteins of the beta-catenin family. May play an important role in cortical development, especially in the maintenance of radial glia. The chain is Coiled-coil domain-containing protein 85C (Ccdc85c) from Mus musculus (Mouse).